We begin with the raw amino-acid sequence, 393 residues long: Prokineticin receptor 1 (393 aa).

The Extracellular portion of the chain corresponds to 1–62; that stretch reads METTVGTLGE…TNSRTFFAAK (62 aa). Residue Asn11 is glycosylated (N-linked (GlcNAc...) asparagine). A helical transmembrane segment spans residues 63-83; that stretch reads IVIGMALVGIMLVCGIGNFIF. Residues 84–98 are Cytoplasmic-facing; that stretch reads ITALARYKKLRNLTN. The chain crosses the membrane as a helical span at residues 99–119; it reads LLIANLAISDFLVAIVCCPFE. At 120 to 145 the chain is on the extracellular side; that stretch reads MDYYVVRQLSWEHGHVLCASVNYLRT. Cys137 and Cys217 form a disulfide bridge. A helical transmembrane segment spans residues 146 to 166; that stretch reads VSLYVSTNALLAIAIDRYLAI. The Cytoplasmic portion of the chain corresponds to 167-179; the sequence is VHPLRPRMKCQTA. A helical membrane pass occupies residues 180–200; the sequence is AGLIFLVWSVSILIAIPAAYF. Topologically, residues 201–232 are extracellular; it reads TTETVLVIVESQEKIFCGQIWPVDQQFYYRSY. Residues 233 to 253 traverse the membrane as a helical segment; sequence FLLVFGLEFVGPVIAMTLCYA. Residues 254-282 lie on the Cytoplasmic side of the membrane; the sequence is RVSRELWFKAVPGFQTEQIRRRLRCRRRT. The chain crosses the membrane as a helical span at residues 283–303; it reads VLGLVCVLSAYVLCWAPFYGF. Topologically, residues 304 to 322 are extracellular; that stretch reads TIVRDFFPSVFVKEKHYLT. The chain crosses the membrane as a helical span at residues 323 to 343; it reads AFYVVECIAMSNSMINTLCFV. The Cytoplasmic segment spans residues 344–393; it reads TVRNNTSKYLKRILRLQWRASPSGSKASADLDLRTTGIPATEEVDCIRLK.

The protein belongs to the G-protein coupled receptor 1 family. As to expression, widely expressed in peripheral tissues with the highest level in the spleen and moderate levels in the adipose tissues, thymus, lung, kidney, testis, uterus and small intestine.

It localises to the cell membrane. In terms of biological role, receptor for prokineticin 1. Exclusively coupled to the G(q) subclass of heteromeric G proteins. Activation leads to mobilization of calcium, stimulation of phosphoinositide turnover and activation of p44/p42 mitogen-activated protein kinase. May play a role during early pregnancy. This is Prokineticin receptor 1 (Prokr1) from Rattus norvegicus (Rat).